Reading from the N-terminus, the 61-residue chain is Toxin S5C1 (61 aa).

Disulfide bonds link Cys3-Cys22, Cys16-Cys39, Cys41-Cys53, and Cys54-Cys59. Positions 45–47 (RGD) match the Cell attachment site motif.

It belongs to the three-finger toxin family. Short-chain subfamily. Antiplatelet toxin sub-subfamily. As to expression, expressed by the venom gland.

It localises to the secreted. Its function is as follows. Inhibits ADP-induced platelet aggregation and inhibits the binding of purified platelet fibrinogen receptor alpha-IIb/beta-3 (ITGA2B/ITGB3) to immobilized fibrinogen. In Dendroaspis jamesoni kaimosae (Eastern Jameson's mamba), this protein is Toxin S5C1.